Reading from the N-terminus, the 442-residue chain is Transcription factor MYCFIDRAFT_198930 (442 aa).

The segment at 1–34 is disordered; that stretch reads MSTTPMAAPPGADLKPVTSSRGRSSTSDEQKLRS. The segment at residues 36 to 63 is a DNA-binding region (zn(2)-C6 fungal-type); the sequence is CESCAQSKLKCSGDKPACARCAKRGLAC. The segment at 74–107 is disordered; it reads KPKGYTSTNDNNPSKRREDSHSPAASQWSSTGHL. Over residues 96–107 the composition is skewed to polar residues; sequence PAASQWSSTGHL.

It localises to the nucleus. Functionally, transcription factor that positively regulates the expression of the gene cluster that mediates the biosynthesis of an emodin derivative that may be involved in black Sigatoka disease of banana. In Pseudocercospora fijiensis (strain CIRAD86) (Black leaf streak disease fungus), this protein is Transcription factor MYCFIDRAFT_198930.